The chain runs to 1135 residues: Retinoblastoma-like protein 2 (1135 aa).

A disordered region spans residues 1-43 (MASGGNQSSPPPPAAAASSEEEEEDGDTADRAQPAGSPSHQIQ). Ser-410 carries the phosphoserine modification. The residue at position 414 (Thr-414) is a Phosphothreonine. The tract at residues 414-613 (TPVSTATHSL…DRIRDNENRV (200 aa)) is domain A. Positions 414 to 1021 (TPVSTATHSL…QTFAMKYSQA (608 aa)) are pocket; binds E1A. Ser-417 is a glycosylation site (O-linked (GlcNAc) serine). The spacer stretch occupies residues 614–824 (PTCEEVTPPH…QGQPLTSSSI (211 aa)). A Phosphoserine modification is found at Ser-636. Position 639 is a phosphothreonine (Thr-639). Disordered stretches follow at residues 649–698 (DAGG…PPQP), 806–825 (ISPG…SSIR), and 932–995 (RRNS…EEEE). The span at 656–674 (SVTSPTTLYDRYSSPTVST) shows a compositional bias: polar residues. Ser-659, Ser-669, and Ser-684 each carry phosphoserine. Low complexity predominate over residues 806–818 (ISPGGQQQNQGQP). Positions 825-1021 (RPRKTSSLSL…QTFAMKYSQA (197 aa)) are domain B. Composition is skewed to polar residues over residues 935–950 (SGSC…PTEL) and 958–969 (DSSPVMRSNSTL). Residues Ser-942, Ser-946, Ser-960, Ser-965, and Ser-967 each carry the phosphoserine modification. Position 968 is a phosphothreonine (Thr-968). Positions 971–981 (VPQPSSAPPTP) are enriched in pro residues. Ser-975 and Ser-976 each carry phosphoserine. Thr-980 carries the post-translational modification Phosphothreonine. A phosphoserine mark is found at Ser-1031, Ser-1064, Ser-1076, and Ser-1108.

It belongs to the retinoblastoma protein (RB) family. Interacts with AATF, KMT5B and KMT5C. Component of the DREAM complex (also named LINC complex) at least composed of E2F4, E2F5, LIN9, LIN37, LIN52, LIN54, MYBL1, MYBL2, RBL1, RBL2, RBBP4, TFDP1 and TFDP2. The complex exists in quiescent cells where it represses cell cycle-dependent genes. It dissociates in S phase when LIN9, LIN37, LIN52 and LIN54 form a subcomplex that binds to MYBL2. Interacts with USP4. Part of the peroxisome proliferator activated receptor alpha (PPAR-alpha) interacting complex (PRIC). Interacts with RINT1. Interacts with PML. Interacts with RBBP9. Interacts with CD53. In terms of processing, during G0 and early G1 phase of the cell cycle, phosphorylated on Ser-636 and on 5 sites within the domain B. Phosphorylation on Ser-669 in G1 leads to its ubiquitin-dependent proteolysis.

It is found in the nucleus. Key regulator of entry into cell division. Directly involved in heterochromatin formation by maintaining overall chromatin structure and, in particular, that of constitutive heterochromatin by stabilizing histone methylation. Recruits and targets histone methyltransferases KMT5B and KMT5C, leading to epigenetic transcriptional repression. Controls histone H4 'Lys-20' trimethylation. Probably acts as a transcription repressor by recruiting chromatin-modifying enzymes to promoters. Potent inhibitor of E2F-mediated trans-activation, associates preferentially with E2F5. Binds to cyclins A and E. Binds to and may be involved in the transforming capacity of the adenovirus E1A protein. May act as a tumor suppressor. This is Retinoblastoma-like protein 2 (Rbl2) from Rattus norvegicus (Rat).